A 263-amino-acid polypeptide reads, in one-letter code: Complement control protein C3 (263 aa).

Residues 1-19 (MKVESVTFLTLLGIGCVLS) form the signal peptide. Sushi domains lie at 20–83 (CCTI…QCIK), 84–145 (RRCP…ICES), 146–203 (VKCQ…TCQI), and 204–263 (VKCP…KCVR). 8 disulfide bridges follow: cysteine 21–cysteine 70, cysteine 54–cysteine 81, cysteine 86–cysteine 126, cysteine 112–cysteine 143, cysteine 148–cysteine 190, cysteine 176–cysteine 201, cysteine 206–cysteine 248, and cysteine 234–cysteine 261.

Belongs to the receptors of complement activation (RCA) family. As to quaternary structure, heterodimer with A56 protein; disulfide-linked.

It localises to the virion membrane. Its subcellular location is the host cell membrane. It is found in the secreted. Its function is as follows. Serves to protect the virus against complement attack by inhibiting both classical and alternative pathways of complement activation. Binds C3b and C4b. This chain is Complement control protein C3, found in Vaccinia virus (strain Copenhagen) (VACV).